A 459-amino-acid chain; its full sequence is Elongation factor 1-alpha 4 (459 aa).

Residues 5–242 form the tr-type G domain; sequence KTHINIVVIG…DCIIPPQRPT (238 aa). The tract at residues 14 to 21 is G1; that stretch reads GHVDSGKS. The interval 70–74 is G2; sequence GITID. The G3 stretch occupies residues 91–94; it reads DAPG. A G4 region spans residues 153 to 156; it reads NKMD. The tract at residues 194–196 is G5; the sequence is SGF. 5-glutamyl glycerylphosphorylethanolamine is present on residues Glu301 and Glu374.

Belongs to the TRAFAC class translation factor GTPase superfamily. Classic translation factor GTPase family. EF-Tu/EF-1A subfamily.

The protein resides in the cytoplasm. Its function is as follows. This protein promotes the GTP-dependent binding of aminoacyl-tRNA to the A-site of ribosomes during protein biosynthesis. The chain is Elongation factor 1-alpha 4 (eft-4) from Oscheius tipulae.